We begin with the raw amino-acid sequence, 616 residues long: Dihydroxy-acid dehydratase (616 aa).

Asp81 serves as a coordination point for Mg(2+). Cys122 is a [2Fe-2S] cluster binding site. Positions 123 and 124 each coordinate Mg(2+). At Lys124 the chain carries N6-carboxylysine. Cys195 lines the [2Fe-2S] cluster pocket. Residue Glu491 coordinates Mg(2+). The active-site Proton acceptor is Ser517.

The protein belongs to the IlvD/Edd family. Homodimer. [2Fe-2S] cluster serves as cofactor. The cofactor is Mg(2+).

It carries out the reaction (2R)-2,3-dihydroxy-3-methylbutanoate = 3-methyl-2-oxobutanoate + H2O. The catalysed reaction is (2R,3R)-2,3-dihydroxy-3-methylpentanoate = (S)-3-methyl-2-oxopentanoate + H2O. The protein operates within amino-acid biosynthesis; L-isoleucine biosynthesis; L-isoleucine from 2-oxobutanoate: step 3/4. It participates in amino-acid biosynthesis; L-valine biosynthesis; L-valine from pyruvate: step 3/4. Its function is as follows. Functions in the biosynthesis of branched-chain amino acids. Catalyzes the dehydration of (2R,3R)-2,3-dihydroxy-3-methylpentanoate (2,3-dihydroxy-3-methylvalerate) into 2-oxo-3-methylpentanoate (2-oxo-3-methylvalerate) and of (2R)-2,3-dihydroxy-3-methylbutanoate (2,3-dihydroxyisovalerate) into 2-oxo-3-methylbutanoate (2-oxoisovalerate), the penultimate precursor to L-isoleucine and L-valine, respectively. The polypeptide is Dihydroxy-acid dehydratase (Photorhabdus laumondii subsp. laumondii (strain DSM 15139 / CIP 105565 / TT01) (Photorhabdus luminescens subsp. laumondii)).